Consider the following 712-residue polypeptide: MAGGPGPGEPAAPGAQHFLYEVPPWVMCRFYKVMDALEPADWCQFAALIVRDQTELRLCERSGQRTASVLWPWINRNARVADLVHILTHLQLLRARDIITAWHPPAPLPSPGTTAPRPSSIPAPAEAEAWSPRKLPSSASTFLSPAFPGSQTHSGPELGLVPSPASLWPPPPSPAPSSTKPGPESSVSLLQGARPFPFCWPLCEISRGTHNFSEELKIGEGGFGCVYRAVMRNTVYAVKRLKENADLEWTAVKQSFLTEVEQLSRFRHPNIVDFAGYCAQNGFYCLVYGFLPNGSLEDRLHCQTQACPPLSWPQRLDILLGTARAIQFLHQDSPSLIHGDIKSSNVLLDERLTPKLGDFGLARFSRFAGSSPSQSSMVARTQTVRGTLAYLPEEYIKTGRLAVDTDTFSFGVVVLETLAGQRAVKTHGARTKYLKDLVEEEAEEAGVALRSTQSTLQAGLAADAWAAPIAMQIYKKHLDPRPGPCPPELGLGLGQLACCCLHRRAKRRPPMTQVYERLEKLQAVVAGVPGHSEAASCIPPSPQENSYVSSTGRAHSGAAPWQPLAAPSGASAQAAEQLQRGPNQPVESDESLGGLSAALRSWHLTPSCPLDPAPLREAGCPQGDTAGESSWGSGPGSRPTAVEGLALGSSASSSSEPPQIIINPARQKMVQKLALYEDGALDSLQLLSSSSLPGLGLEQDRQGPEESDEFQS.

One can recognise a Death domain in the interval 27-106 (MCRFYKVMDA…DIITAWHPPA (80 aa)). Position 66 is a phosphothreonine; by PKC/PRKCI (Thr-66). Residues 105–187 (PAPLPSPGTT…STKPGPESSV (83 aa)) form a disordered region. The proST region stretch occupies residues 110–211 (SPGTTAPRPS…LCEISRGTHN (102 aa)). Residues 115-133 (APRPSSIPAPAEAEAWSPR) show a composition bias toward low complexity. Ser-131 carries the post-translational modification Phosphoserine. Lys-134 participates in a covalent cross-link: Glycyl lysine isopeptide (Lys-Gly) (interchain with G-Cter in ubiquitin). A compositionally biased stretch (polar residues) spans 137 to 154 (SSASTFLSPAFPGSQTHS). Lys-180 is covalently cross-linked (Glycyl lysine isopeptide (Lys-Gly) (interchain with G-Cter in ubiquitin)). Phosphothreonine; by IRAK4 is present on Thr-209. Residues 212 to 521 (FSEELKIGEG…TQVYERLEKL (310 aa)) form the Protein kinase domain. Residues 218–226 (IGEGGFGCV) and Lys-239 contribute to the ATP site. Asp-340 acts as the Proton acceptor in catalysis. ATP is bound by residues 342-345 (KSSN) and Asp-358. Residues Ser-371 and Ser-375 each carry the phosphoserine modification. Thr-387 carries the post-translational modification Phosphothreonine. Disordered regions lie at residues 532–591 (SEAA…SDES), 613–660 (APLR…PPQI), and 690–712 (SSLP…EFQS). The segment covering 543–553 (QENSYVSSTGR) has biased composition (polar residues). Ser-556 bears the Phosphoserine mark. Low complexity-rich tracts occupy residues 562–575 (QPLA…AQAA) and 643–658 (EGLA…SEPP).

Belongs to the protein kinase superfamily. TKL Ser/Thr protein kinase family. Pelle subfamily. Homodimer. Forms a complex with TRAF6, PELI1, IRAK4 and MYD88. Direct binding of SMAD6 to PELI1 prevents complex formation and hence negatively regulates IL1R-TLR signaling and eventually NF-kappa-B-mediated gene expression. The TRAF6-PELI1-IRAK4-MYD88 complex recruits MAP3K7/TAK1, TAB1 and TAB2 to mediate NF-kappa-B activation. Interaction with MYD88 recruits IRAK1 to the stimulated receptor complex. Interacts with TOLLIP; this interaction occurs in the cytosol prior to receptor activation. Interacts with IL1RL1. Interacts with PELI1 and TRAF6. Interacts (when polyubiquitinated) with IKBKG/NEMO. Interacts with RSAD2/viperin. Interacts with IRAK1BP1. Interacts with PELI2. Interacts with ZC3H12A; this interaction increases the interaction between ZC3H12A and IKBKB/IKKB. Interacts with IRAK4. Interacts with PELI3. Interacts with INAVA; the interaction takes place upon PRR stimulation. Interacts (via C-terminus) with NFATC4 (via N-terminus). In terms of assembly, (Microbial infection) Interacts with mumps virus protein SH; this interaction inhibits downstream NF-kappa-B pathway activation. As to quaternary structure, (Microbial infection) Interacts with alphaviruses SINV, CHIKV, RRV, VEEV and EEEV capsid proteins; the interactions lead to inhibition of IRAK1-dependent signaling. It depends on Mg(2+) as a cofactor. Following recruitment on the activated receptor complex, phosphorylated on Thr-209, probably by IRAK4, resulting in a conformational change of the kinase domain, allowing further phosphorylations to take place. Thr-387 phosphorylation in the activation loop is required to achieve full enzymatic activity. Post-translationally, polyubiquitinated by TRAF6 after cell stimulation with IL-1-beta by PELI1, PELI2 and PELI3. Polyubiquitination occurs with polyubiquitin chains linked through 'Lys-63'. Ubiquitination promotes interaction with NEMO/IKBKG. Also sumoylated; leading to nuclear translocation. In terms of tissue distribution, isoform 1 and isoform 2 are ubiquitously expressed in all tissues examined, with isoform 1 being more strongly expressed than isoform 2.

Its subcellular location is the cytoplasm. The protein resides in the nucleus. It localises to the lipid droplet. The catalysed reaction is L-seryl-[protein] + ATP = O-phospho-L-seryl-[protein] + ADP + H(+). The enzyme catalyses L-threonyl-[protein] + ATP = O-phospho-L-threonyl-[protein] + ADP + H(+). Functionally, serine/threonine-protein kinase that plays a critical role in initiating innate immune response against foreign pathogens. Involved in Toll-like receptor (TLR) and IL-1R signaling pathways. Is rapidly recruited by MYD88 to the receptor-signaling complex upon TLR activation. Association with MYD88 leads to IRAK1 phosphorylation by IRAK4 and subsequent autophosphorylation and kinase activation. Phosphorylates E3 ubiquitin ligases Pellino proteins (PELI1, PELI2 and PELI3) to promote pellino-mediated polyubiquitination of IRAK1. Then, the ubiquitin-binding domain of IKBKG/NEMO binds to polyubiquitinated IRAK1 bringing together the IRAK1-MAP3K7/TAK1-TRAF6 complex and the NEMO-IKKA-IKKB complex. In turn, MAP3K7/TAK1 activates IKKs (CHUK/IKKA and IKBKB/IKKB) leading to NF-kappa-B nuclear translocation and activation. Alternatively, phosphorylates TIRAP to promote its ubiquitination and subsequent degradation. Phosphorylates the interferon regulatory factor 7 (IRF7) to induce its activation and translocation to the nucleus, resulting in transcriptional activation of type I IFN genes, which drive the cell in an antiviral state. When sumoylated, translocates to the nucleus and phosphorylates STAT3. The sequence is that of Interleukin-1 receptor-associated kinase 1 from Homo sapiens (Human).